Reading from the N-terminus, the 425-residue chain is Serine--tRNA ligase (425 aa).

230-232 (TAE) contributes to the L-serine binding site. 261–263 (RSE) contacts ATP. Residue glutamate 284 coordinates L-serine. Residue 348–351 (EISS) participates in ATP binding. Serine 384 contributes to the L-serine binding site.

Belongs to the class-II aminoacyl-tRNA synthetase family. Type-1 seryl-tRNA synthetase subfamily. Homodimer. The tRNA molecule binds across the dimer.

It is found in the cytoplasm. It carries out the reaction tRNA(Ser) + L-serine + ATP = L-seryl-tRNA(Ser) + AMP + diphosphate + H(+). The catalysed reaction is tRNA(Sec) + L-serine + ATP = L-seryl-tRNA(Sec) + AMP + diphosphate + H(+). Its pathway is aminoacyl-tRNA biosynthesis; selenocysteinyl-tRNA(Sec) biosynthesis; L-seryl-tRNA(Sec) from L-serine and tRNA(Sec): step 1/1. Its function is as follows. Catalyzes the attachment of serine to tRNA(Ser). Is also able to aminoacylate tRNA(Sec) with serine, to form the misacylated tRNA L-seryl-tRNA(Sec), which will be further converted into selenocysteinyl-tRNA(Sec). The polypeptide is Serine--tRNA ligase (Streptococcus pyogenes serotype M6 (strain ATCC BAA-946 / MGAS10394)).